The following is a 268-amino-acid chain: Type III pantothenate kinase (268 aa).

Residue 6-13 (DVGNTNIV) coordinates ATP. Substrate contacts are provided by residues Tyr100 and 107–110 (GADR). The active-site Proton acceptor is the Asp109. Asp129 lines the K(+) pocket. Thr132 lines the ATP pocket. Residue Thr184 participates in substrate binding.

Belongs to the type III pantothenate kinase family. In terms of assembly, homodimer. NH4(+) is required as a cofactor. Requires K(+) as cofactor.

It localises to the cytoplasm. It carries out the reaction (R)-pantothenate + ATP = (R)-4'-phosphopantothenate + ADP + H(+). It participates in cofactor biosynthesis; coenzyme A biosynthesis; CoA from (R)-pantothenate: step 1/5. Catalyzes the phosphorylation of pantothenate (Pan), the first step in CoA biosynthesis. This is Type III pantothenate kinase from Alkaliphilus metalliredigens (strain QYMF).